A 205-amino-acid chain; its full sequence is Thymidine kinase (205 aa).

ATP-binding positions include 9–16 (SAMNAGKS) and 87–90 (DESQ). E88 serves as the catalytic Proton acceptor. Residues C145, C147, C182, and H185 each coordinate Zn(2+).

It belongs to the thymidine kinase family. As to quaternary structure, homotetramer.

The protein localises to the cytoplasm. It carries out the reaction thymidine + ATP = dTMP + ADP + H(+). The sequence is that of Thymidine kinase from Salmonella choleraesuis (strain SC-B67).